The chain runs to 793 residues: Meiosis-specific protein ASY3 (793 aa).

Disordered regions lie at residues 1–40 (MSDYRSFGSNYHPSSQSRKISIGVMADSQPKRNLVPDKDD), 58–97 (LQANKKEKSDLAAKQRNSAQVTGHVTSPWRSPRSSHRKLG), 110–287 (LSGS…KAGA), and 305–586 (EGLR…KRNS). Positions 7-19 (FGSNYHPSSQSRK) are enriched in polar residues. Positions 60–70 (ANKKEKSDLAA) are enriched in basic and acidic residues. Residues 72-86 (QRNSAQVTGHVTSPW) are compositionally biased toward polar residues. The segment covering 110–122 (LSGSKGLNKGLNG) has biased composition (low complexity). Residues 131–142 (SFQNCPISSPQH) are compositionally biased toward polar residues. 2 stretches are compositionally biased toward basic and acidic residues: residues 151-165 (RNDRVMDRSPERMEE) and 177-187 (SQREKMDKPGK). Over residues 209-219 (PANNEDVNSET) the composition is skewed to polar residues. Residues 221–248 (EVEKTNFKLSQDKGSNDDPLIKPRHNSD) are compositionally biased toward basic and acidic residues. The span at 322–341 (KKQRGRRKNTVVKCRKAHSR) shows a compositional bias: basic residues. Composition is skewed to basic and acidic residues over residues 342 to 354 (KKDEADWSRKEAS), 363 to 385 (ESTETGKRSSSSDKKGSSHDLHP), 392 to 407 (QKPDISTREGDFHPSP), and 424 to 441 (NGDKHERPSNIFREKSVE). Composition is skewed to low complexity over residues 455–470 (APISSPSPCCSPEASP) and 491–502 (GTKKTSQGTTGQ). Composition is skewed to basic and acidic residues over residues 505 to 527 (DTEKRLPDFLEKKRDYSFRRESS) and 541 to 553 (SDERDSDGSREDS). Residues 682–745 (SNLAKTKRKH…KGSIKKQRTS (64 aa)) are a coiled coil.

Interacts with ASY1.

The protein localises to the chromosome. It is found in the nucleus. Its function is as follows. Required for normal meiosis in male and female gametophytes. Acts with ASY1 at the interface between the developing chromosome axes and the recombination machinery to ensure interhomolog recombination. Required for synaptonemal complex formation during meiosis. In Arabidopsis thaliana (Mouse-ear cress), this protein is Meiosis-specific protein ASY3.